The following is a 92-amino-acid chain: Beta-2-microglobulin (92 aa).

The Ig-like C1-type domain occupies 2 to 91; the sequence is PQIQVYTRHP…VSMKEPKTVN (90 aa). A disulfide bridge links cysteine 22 with cysteine 77.

Belongs to the beta-2-microglobulin family. In terms of assembly, heterodimer of an alpha chain and a beta chain. Beta-2-microglobulin is the beta-chain of major histocompatibility complex class I molecules.

It localises to the secreted. Component of the class I major histocompatibility complex (MHC). Involved in the presentation of peptide antigens to the immune system. The sequence is that of Beta-2-microglobulin (B2m) from Mus caroli (Ryukyu mouse).